Reading from the N-terminus, the 180-residue chain is Acireductone dioxygenase (180 aa).

Residues His97, His99, Glu103, and His141 each contribute to the Fe(2+) site. His97, His99, Glu103, and His141 together coordinate Ni(2+).

Belongs to the acireductone dioxygenase (ARD) family. As to quaternary structure, monomer. Requires Fe(2+) as cofactor. It depends on Ni(2+) as a cofactor.

It carries out the reaction 1,2-dihydroxy-5-(methylsulfanyl)pent-1-en-3-one + O2 = 3-(methylsulfanyl)propanoate + CO + formate + 2 H(+). It catalyses the reaction 1,2-dihydroxy-5-(methylsulfanyl)pent-1-en-3-one + O2 = 4-methylsulfanyl-2-oxobutanoate + formate + 2 H(+). It functions in the pathway amino-acid biosynthesis; L-methionine biosynthesis via salvage pathway; L-methionine from S-methyl-5-thio-alpha-D-ribose 1-phosphate: step 5/6. Catalyzes 2 different reactions between oxygen and the acireductone 1,2-dihydroxy-3-keto-5-methylthiopentene (DHK-MTPene) depending upon the metal bound in the active site. Fe-containing acireductone dioxygenase (Fe-ARD) produces formate and 2-keto-4-methylthiobutyrate (KMTB), the alpha-ketoacid precursor of methionine in the methionine recycle pathway. Ni-containing acireductone dioxygenase (Ni-ARD) produces methylthiopropionate, carbon monoxide and formate, and does not lie on the methionine recycle pathway. This Klebsiella pneumoniae subsp. pneumoniae (strain ATCC 700721 / MGH 78578) protein is Acireductone dioxygenase.